The primary structure comprises 212 residues: Uridine kinase (212 aa).

An ATP-binding site is contributed by 13–20 (GASASGKS).

Belongs to the uridine kinase family.

Its subcellular location is the cytoplasm. The enzyme catalyses uridine + ATP = UMP + ADP + H(+). It carries out the reaction cytidine + ATP = CMP + ADP + H(+). Its pathway is pyrimidine metabolism; CTP biosynthesis via salvage pathway; CTP from cytidine: step 1/3. The protein operates within pyrimidine metabolism; UMP biosynthesis via salvage pathway; UMP from uridine: step 1/1. The polypeptide is Uridine kinase (Shewanella piezotolerans (strain WP3 / JCM 13877)).